Consider the following 132-residue polypeptide: MSGGKGGKAGSAAKASQSRSAKAGLTFPVGRVHRLLRRGNYAQRIGSGAPVYLTAVLEYLAAEILELAGNAARDNKKTRIIPRHLQLAIRNDDELNKLLGNVTIAQGGVLPNIHQNLLPKKSAKTAKASQEL.

N-acetylserine is present on Ser2. Residues Lys5 and Lys8 each carry the N6-acetyllysine modification. N6-succinyllysine occurs at positions 14 and 22. The residue at position 106 (Gln106) is an N5-methylglutamine. Lys120 carries the N6-malonyllysine modification. A Glycyl lysine isopeptide (Lys-Gly) (interchain with G-Cter in SUMO) cross-link involves residue Lys127. Position 129 is a phosphoserine (Ser129). A [ST]-Q motif motif is present at residues 129–130 (SQ).

The protein belongs to the histone H2A family. The nucleosome is a histone octamer containing two molecules each of H2A, H2B, H3 and H4 assembled in one H3-H4 heterotetramer and two H2A-H2B heterodimers. The octamer wraps approximately 147 bp of DNA. Interacts with NAP1. Phosphorylated to form H2AS128ph (gamma-H2A) in response to DNA double-strand breaks (DSBs) generated by exogenous genotoxic agents and by stalled replication forks. Phosphorylation is dependent on the DNA damage checkpoint kinases MEC1/ATR and TEL1/ATM, spreads on either side of a detected DSB site and may mark the surrounding chromatin for recruitment of proteins required for DNA damage signaling and repair. Gamma-H2A interacts with ARP4, a shared component of the NuA4 histone acetyltransferase complex and the INO80 and SWR1 chromatin remodeling complexes, and serves to recruit first NuA4, mediating histone H4 acetylation, and subsequently the INO80/SWR1 complexes, facilitating DNA resection, to DSB sites. Gamma-H2A is required for sequestering cohesin around the break site, which is important for efficient post-replicative double-strand break repair by homologous recombination, holding the damaged chromatid close to its undamaged sister template. Gamma-H2A is removed from the DNA prior to the strand invasion-primer extension step of the repair process and subsequently dephosphorylated by PPH3, a component of the histone H2A phosphatase complex (HTP-C). Dephosphorylation is necessary for efficient recovery from the DNA damage checkpoint. Post-translationally, N-acetylated by NAT4. In terms of processing, acetylated by ESA1, a component of the NuA4 histone acetyltransferase (HAT) complex, to form H2AK4ac and H2AK7ac. Glutamine methylation at Gln-106 (H2AQ105me) by NOP1 is specifically dedicated to polymerase I. It is present at 35S ribosomal DNA locus and impairs binding of the FACT complex. Post-translationally, sumoylated to from H2AK126su. May lead to transcriptional repression.

The protein localises to the nucleus. Its subcellular location is the chromosome. Its function is as follows. Core component of nucleosome which plays a central role in DNA double strand break (DSB) repair. Nucleosomes wrap and compact DNA into chromatin, limiting DNA accessibility to the cellular machineries which require DNA as a template. Histones thereby play a central role in transcription regulation, DNA repair, DNA replication and chromosomal stability. DNA accessibility is regulated via a complex set of post-translational modifications of histones, also called histone code, and nucleosome remodeling. The protein is Histone H2A.2 (HTA2) of Saccharomyces cerevisiae (strain ATCC 204508 / S288c) (Baker's yeast).